The sequence spans 578 residues: Proline--tRNA ligase (578 aa).

This sequence belongs to the class-II aminoacyl-tRNA synthetase family. ProS type 1 subfamily. Homodimer.

It is found in the cytoplasm. It catalyses the reaction tRNA(Pro) + L-proline + ATP = L-prolyl-tRNA(Pro) + AMP + diphosphate. Functionally, catalyzes the attachment of proline to tRNA(Pro) in a two-step reaction: proline is first activated by ATP to form Pro-AMP and then transferred to the acceptor end of tRNA(Pro). As ProRS can inadvertently accommodate and process non-cognate amino acids such as alanine and cysteine, to avoid such errors it has two additional distinct editing activities against alanine. One activity is designated as 'pretransfer' editing and involves the tRNA(Pro)-independent hydrolysis of activated Ala-AMP. The other activity is designated 'posttransfer' editing and involves deacylation of mischarged Ala-tRNA(Pro). The misacylated Cys-tRNA(Pro) is not edited by ProRS. The sequence is that of Proline--tRNA ligase from Burkholderia orbicola (strain AU 1054).